We begin with the raw amino-acid sequence, 250 residues long: tRNA (guanine-N(1)-)-methyltransferase (250 aa).

S-adenosyl-L-methionine-binding positions include glycine 116 and 136 to 141 (IGDYVL).

The protein belongs to the RNA methyltransferase TrmD family. In terms of assembly, homodimer.

It localises to the cytoplasm. It carries out the reaction guanosine(37) in tRNA + S-adenosyl-L-methionine = N(1)-methylguanosine(37) in tRNA + S-adenosyl-L-homocysteine + H(+). Functionally, specifically methylates guanosine-37 in various tRNAs. The sequence is that of tRNA (guanine-N(1)-)-methyltransferase from Pseudomonas savastanoi pv. phaseolicola (strain 1448A / Race 6) (Pseudomonas syringae pv. phaseolicola (strain 1448A / Race 6)).